We begin with the raw amino-acid sequence, 292 residues long: NAD-dependent protein deacetylase sir-2.4 (292 aa).

Residues 31 to 292 form the Deacetylase sirtuin-type domain; it reads IEKLRTLYNH…DEVPIPLKIS (262 aa). NAD(+) is bound by residues 56 to 75 and 116 to 119; these read GAGVSTGSKLPDFRGKQGVW and QNVD. His-136 serves as the catalytic Proton acceptor. Cys-144, Cys-147, Cys-163, and Cys-169 together coordinate Zn(2+). Residues 216-218, 242-244, and Val-260 contribute to the NAD(+) site; these read GTS and NYQ.

Belongs to the sirtuin family. Class IV subfamily. Zn(2+) serves as cofactor.

The enzyme catalyses N(6)-acetyl-L-lysyl-[protein] + NAD(+) + H2O = 2''-O-acetyl-ADP-D-ribose + nicotinamide + L-lysyl-[protein]. NAD-dependent protein deacetylase. The protein is NAD-dependent protein deacetylase sir-2.4 (sir-2.4) of Caenorhabditis elegans.